The sequence spans 93 residues: Small ribosomal subunit protein uS19 (93 aa).

The protein belongs to the universal ribosomal protein uS19 family.

In terms of biological role, protein S19 forms a complex with S13 that binds strongly to the 16S ribosomal RNA. The sequence is that of Small ribosomal subunit protein uS19 from Mycobacteroides abscessus (strain ATCC 19977 / DSM 44196 / CCUG 20993 / CIP 104536 / JCM 13569 / NCTC 13031 / TMC 1543 / L948) (Mycobacterium abscessus).